Here is a 360-residue protein sequence, read N- to C-terminus: MSILNLARTNVLTLEPYQSARRIGGGSQGNIWLNANEYPQPTFYMLRSSNLNRYPDCQPQELLNSYAAYAGVQPNQVLACRGADEGIELLIRTFCEPSKDKILFCPPTYGMYRVSAETFGVAYCAIQALDNWQLDLDTIYAQLDCVKLIYICHPNNPTGNIINPSDIRQLLDITHGRTILVVDEAYIDFYPTASISSWINHYPHLVILRTLSKAFALAGLRCGFILANPDIIKLLLKVIAPYPISRPVVDIAKQALSTKGIHQTKRRVANIDINRNWLIQQLAECSCVSVVFPSVTNYLLVRFHPNYHVFQSLWKKGTILRDQNQQIGLANCLRITIGTSLECQNLLTALQALTLVSHKE.

N6-(pyridoxal phosphate)lysine is present on Lys213.

The protein belongs to the class-II pyridoxal-phosphate-dependent aminotransferase family. Histidinol-phosphate aminotransferase subfamily. Homodimer. Pyridoxal 5'-phosphate serves as cofactor.

The catalysed reaction is L-histidinol phosphate + 2-oxoglutarate = 3-(imidazol-4-yl)-2-oxopropyl phosphate + L-glutamate. The protein operates within amino-acid biosynthesis; L-histidine biosynthesis; L-histidine from 5-phospho-alpha-D-ribose 1-diphosphate: step 7/9. This is Histidinol-phosphate aminotransferase from Baumannia cicadellinicola subsp. Homalodisca coagulata.